A 485-amino-acid chain; its full sequence is MFS-type transporter phm3 (485 aa).

Residues Met1–Thr22 are disordered. 12 helical membrane passes run Phe55 to Ala75, Ile83 to Leu103, Leu113 to Ser133, Phe144 to Leu164, Ala175 to Val195, Trp203 to Met223, Pro278 to Phe298, Gly317 to Leu337, Leu357 to Ser377, Trp384 to Pro404, Ala421 to Pro441, and Leu449 to Val469.

It belongs to the major facilitator superfamily.

It localises to the cell membrane. Its function is as follows. MFS-type transporter; part of the gene cluster that mediates the biosynthesis of the trans-fused decalin-containing tetramic acid phomasetin. This is MFS-type transporter phm3 from Pyrenochaetopsis sp.